Reading from the N-terminus, the 407-residue chain is Accessory Sec system protein translocase subunit SecY2 (407 aa).

The next 10 helical transmembrane spans lie at 22 to 42, 68 to 88, 108 to 128, 136 to 156, 169 to 189, 191 to 211, 245 to 265, 280 to 300, 343 to 363, and 366 to 386; these read IAFT…TIVD, LNVF…ISLI, EKFL…NQFV, FTEL…MWLA, PIVL…IVSI, ILML…LLLT, ISIM…NLIF, FGHY…GYLL, WFGT…SLLV, and LSEY…AMNI.

Belongs to the SecY/SEC61-alpha family. SecY2 subfamily. As to quaternary structure, component of the accessory SecA2/SecY2 protein translocase complex required to export cell wall proteins. May form heterotrimers with SecE and SecG subunits.

Its subcellular location is the cell membrane. Its function is as follows. Part of the accessory SecA2/SecY2 system specifically required for export of possible cell wall proteins. The central subunit of a protein translocation channel. The sequence is that of Accessory Sec system protein translocase subunit SecY2 from Staphylococcus pseudintermedius (strain ED99).